We begin with the raw amino-acid sequence, 354 residues long: MSQLKNDRYLRALLREPVDYTPVWMMRQAGRYLPEYKATRAQAGDFMSLCRNAELACEVTLQPLRRYDLDAAILFSDILTVPDAMGLGLSFGAGEGPKFARPVENAAMVENLPIPDPETELQYVMNAVRTIRRELQGEVPLIGFSGSPWTLATYMVEGGSSKAFTKIKKMMYADPQTLHKLLDKVSDAVILYLNAQIKAGAQAVMIFDTWGGVLAHRDYPDFSLQYMQKIVAGLIRENDGRKVPITLFTKGGGLWLEQIANSGCDAVGVDWTVNLAEAKAKIGHKVALQGNMDPSVLYARPARIRQEVRSILADFGNGSGHVFNLGHGIHQDVPVENPKIFVDAVHEYSKAYHK.

Substrate-binding positions include 27–31 (RQAGR), aspartate 77, tyrosine 154, threonine 209, and histidine 327.

Belongs to the uroporphyrinogen decarboxylase family. In terms of assembly, homodimer.

It localises to the cytoplasm. The enzyme catalyses uroporphyrinogen III + 4 H(+) = coproporphyrinogen III + 4 CO2. The protein operates within porphyrin-containing compound metabolism; protoporphyrin-IX biosynthesis; coproporphyrinogen-III from 5-aminolevulinate: step 4/4. In terms of biological role, catalyzes the decarboxylation of four acetate groups of uroporphyrinogen-III to yield coproporphyrinogen-III. The protein is Uroporphyrinogen decarboxylase of Actinobacillus succinogenes (strain ATCC 55618 / DSM 22257 / CCUG 43843 / 130Z).